We begin with the raw amino-acid sequence, 996 residues long: Protein psiR (996 aa).

Positions 1–21 (MKKIILMLLLFSIFFILKSES) are cleaved as a signal peptide. N-linked (GlcNAc...) asparagine glycosylation is found at Asn79, Asn117, Asn323, Asn396, Asn428, Asn474, Asn500, Asn645, and Asn779. The 146-residue stretch at 105-250 (QSLSNPNIYS…YDECGVCEGD (146 aa)) folds into the PA14 domain.

Belongs to the prespore-cell-inducing factor family.

It is found in the secreted. The protein is Protein psiR (psiR) of Dictyostelium discoideum (Social amoeba).